Consider the following 485-residue polypeptide: MPGTSVSDLPTTATAVDAPALLPLPVGRPQAPALVRGKLYIKTHGCQMNEYDSAKMADVLAASEGLELTDNPEDADVVLVNTCSIREKAQEKVFSQLGRWKALKAGGKPVIIGVGGCVASQEGEAIVKRAPYVDLVFGPQTLHRLPELIRARRESGKSQVDISFPEIEKFDRLPEPRADGPSAFVSIMEGCSKYCSFCVVPYTRGEEVSRPFEDVLVEVAQLAAQGVREINLLGQNVNAYRGAYGADAGEPAQYADLGLLIRTIAQIDGIGRIRFTTSHPLEFSDSLVDAYRDVPQLANYLHLPVQAGSDRILSAMKRGYTALEFKSKIRKLRAVRPDISISSDFIVGFPGETDADFDKTMKLIEDVGFDQSFSFIYSRRPGTPASDLEDDTPDAVKQARLARLQAHINAHAAGISQRMVGSVQRVLVEGPSRRDANELTGKTENMRPVNFPGNPRLVGQFVDVLITEALSNSLRGRIQLDDSAA.

Positions 37–154 constitute an MTTase N-terminal domain; the sequence is GKLYIKTHGC…LPELIRARRE (118 aa). Positions 46, 83, 117, 191, 195, and 198 each coordinate [4Fe-4S] cluster. One can recognise a Radical SAM core domain in the interval 177 to 416; that stretch reads RADGPSAFVS…HINAHAAGIS (240 aa). The TRAM domain maps to 417–480; the sequence is QRMVGSVQRV…SNSLRGRIQL (64 aa).

This sequence belongs to the methylthiotransferase family. MiaB subfamily. Monomer. [4Fe-4S] cluster is required as a cofactor.

Its subcellular location is the cytoplasm. The enzyme catalyses N(6)-dimethylallyladenosine(37) in tRNA + (sulfur carrier)-SH + AH2 + 2 S-adenosyl-L-methionine = 2-methylsulfanyl-N(6)-dimethylallyladenosine(37) in tRNA + (sulfur carrier)-H + 5'-deoxyadenosine + L-methionine + A + S-adenosyl-L-homocysteine + 2 H(+). Catalyzes the methylthiolation of N6-(dimethylallyl)adenosine (i(6)A), leading to the formation of 2-methylthio-N6-(dimethylallyl)adenosine (ms(2)i(6)A) at position 37 in tRNAs that read codons beginning with uridine. This is tRNA-2-methylthio-N(6)-dimethylallyladenosine synthase from Xanthomonas campestris pv. campestris (strain 8004).